Consider the following 270-residue polypeptide: 3-methyl-2-oxobutanoate hydroxymethyltransferase (270 aa).

Aspartate 41 and aspartate 80 together coordinate Mg(2+). 3-methyl-2-oxobutanoate is bound by residues 41–42 (DS), aspartate 80, and lysine 109. Glutamate 111 is a Mg(2+) binding site. Glutamate 178 serves as the catalytic Proton acceptor.

This sequence belongs to the PanB family. In terms of assembly, homodecamer; pentamer of dimers. Mg(2+) serves as cofactor.

It is found in the cytoplasm. The catalysed reaction is 3-methyl-2-oxobutanoate + (6R)-5,10-methylene-5,6,7,8-tetrahydrofolate + H2O = 2-dehydropantoate + (6S)-5,6,7,8-tetrahydrofolate. The protein operates within cofactor biosynthesis; (R)-pantothenate biosynthesis; (R)-pantoate from 3-methyl-2-oxobutanoate: step 1/2. Catalyzes the reversible reaction in which hydroxymethyl group from 5,10-methylenetetrahydrofolate is transferred onto alpha-ketoisovalerate to form ketopantoate. In Thermotoga neapolitana (strain ATCC 49049 / DSM 4359 / NBRC 107923 / NS-E), this protein is 3-methyl-2-oxobutanoate hydroxymethyltransferase.